The sequence spans 127 residues: uncharacterized protein (127 aa).

This is an uncharacterized protein from Escherichia coli (strain K12).